Consider the following 183-residue polypeptide: A-type ATP synthase subunit E (183 aa).

The protein belongs to the V-ATPase E subunit family. Has multiple subunits with at least A(3), B(3), C, D, E, F, H, I and proteolipid K(x).

It is found in the cell membrane. Its function is as follows. Component of the A-type ATP synthase that produces ATP from ADP in the presence of a proton gradient across the membrane. This Methanosarcina acetivorans (strain ATCC 35395 / DSM 2834 / JCM 12185 / C2A) protein is A-type ATP synthase subunit E.